The primary structure comprises 537 residues: Endoprotease aex-5 (537 aa).

The first 17 residues, 1–17, serve as a signal peptide directing secretion; that stretch reads MKLIFLLLLFGVSPIVC. Positions 18-99 are excised as a propeptide; the sequence is QDFEDGVFLA…KLQGFRRYKR (82 aa). The region spanning 111–413 is the Peptidase S8 domain; that stretch reads VWNLTPSLYI…FGLLNAQKLV (303 aa). An N-linked (GlcNAc...) asparagine glycan is attached at Asn129. Residues Asp139 and His178 each act as charge relay system in the active site. A disulfide bridge connects residues Cys286 and Cys316. Ser346 functions as the Charge relay system in the catalytic mechanism. Residue Asn380 is glycosylated (N-linked (GlcNAc...) asparagine). The P/Homo B domain maps to 407–537; the sequence is LNAQKLVVMA…KMFKVVGTMS (131 aa).

The protein belongs to the peptidase S8 family. Furin subfamily.

It is found in the secreted. In terms of biological role, probable serine endoprotease which cleaves preproteins at paired basic amino acids. May process FMRFamide-like (flp) and neuropeptide-like protein (nlp) neuropeptides. In muscles, involved in neuronal retrograde signaling by regulating presynaptic activity and localization of synaptic vesicle fusion protein unc-13 at the neuromuscular junction (NMJ). Acts in the intestine to regulate anterior body muscle contractions (aBOC) and the expulsion steps during the defecation motor program (DMP). Probably by regulating DMP, required for fatty acid uptake by intestinal cells and therefore regulates the levels of triglycerides in the intestine. Plays a role in locomotion. The sequence is that of Endoprotease aex-5 from Caenorhabditis elegans.